The chain runs to 575 residues: Delta-1-pyrroline-5-carboxylate dehydrogenase, mitochondrial (575 aa).

Residue 297-302 (GKIQSG) participates in NAD(+) binding. Residue Glu-317 is the Proton acceptor of the active site. Cys-351 acts as the Nucleophile in catalysis.

This sequence belongs to the aldehyde dehydrogenase family.

It is found in the mitochondrion inner membrane. It catalyses the reaction L-glutamate 5-semialdehyde + NAD(+) + H2O = L-glutamate + NADH + 2 H(+). Its pathway is amino-acid degradation; L-proline degradation into L-glutamate; L-glutamate from L-proline: step 2/2. This is Delta-1-pyrroline-5-carboxylate dehydrogenase, mitochondrial (PUT2) from Saccharomyces cerevisiae (strain ATCC 204508 / S288c) (Baker's yeast).